The sequence spans 593 residues: Aspartate--tRNA(Asp/Asn) ligase (593 aa).

Glutamate 175 contacts L-aspartate. The tract at residues 199–202 (QQYK) is aspartate. 2 residues coordinate L-aspartate: arginine 221 and histidine 452. Residue 221–223 (RDE) coordinates ATP. Glutamate 486 lines the ATP pocket. L-aspartate is bound at residue arginine 493. 538 to 541 (GVDR) serves as a coordination point for ATP.

The protein belongs to the class-II aminoacyl-tRNA synthetase family. Type 1 subfamily. Homodimer.

It is found in the cytoplasm. The catalysed reaction is tRNA(Asx) + L-aspartate + ATP = L-aspartyl-tRNA(Asx) + AMP + diphosphate. Aspartyl-tRNA synthetase with relaxed tRNA specificity since it is able to aspartylate not only its cognate tRNA(Asp) but also tRNA(Asn). Reaction proceeds in two steps: L-aspartate is first activated by ATP to form Asp-AMP and then transferred to the acceptor end of tRNA(Asp/Asn). This Novosphingobium aromaticivorans (strain ATCC 700278 / DSM 12444 / CCUG 56034 / CIP 105152 / NBRC 16084 / F199) protein is Aspartate--tRNA(Asp/Asn) ligase.